A 230-amino-acid chain; its full sequence is Uracil-DNA glycosylase (230 aa).

The active-site Proton acceptor is the D65.

The protein belongs to the uracil-DNA glycosylase (UDG) superfamily. UNG family.

The protein resides in the cytoplasm. It carries out the reaction Hydrolyzes single-stranded DNA or mismatched double-stranded DNA and polynucleotides, releasing free uracil.. Functionally, excises uracil residues from the DNA which can arise as a result of misincorporation of dUMP residues by DNA polymerase or due to deamination of cytosine. The polypeptide is Uracil-DNA glycosylase (Pediococcus pentosaceus (strain ATCC 25745 / CCUG 21536 / LMG 10740 / 183-1w)).